A 506-amino-acid chain; its full sequence is Glutamate--tRNA ligase (506 aa).

Positions 21–31 match the 'HIGH' region motif; it reads PSPTGIPHVGM. A 'KMSKS' region motif is present at residues 265-269; that stretch reads KLSKR. K268 is a binding site for ATP.

Belongs to the class-I aminoacyl-tRNA synthetase family. Glutamate--tRNA ligase type 1 subfamily. Monomer.

It localises to the cytoplasm. It catalyses the reaction tRNA(Glu) + L-glutamate + ATP = L-glutamyl-tRNA(Glu) + AMP + diphosphate. In terms of biological role, catalyzes the attachment of glutamate to tRNA(Glu) in a two-step reaction: glutamate is first activated by ATP to form Glu-AMP and then transferred to the acceptor end of tRNA(Glu). This is Glutamate--tRNA ligase from Bifidobacterium adolescentis (strain ATCC 15703 / DSM 20083 / NCTC 11814 / E194a).